The primary structure comprises 146 residues: Lysozyme C (146 aa).

A signal peptide spans 1–16; sequence SGKYISWEDSCSYLQL. Residues 17–146 enclose the C-type lysozyme domain; it reads QKYERCELAK…LSQWTQGCKL (130 aa). 4 disulfides stabilise this stretch: cysteine 22-cysteine 144, cysteine 46-cysteine 132, cysteine 81-cysteine 97, and cysteine 93-cysteine 111. Active-site residues include glutamate 51 and aspartate 69.

The protein belongs to the glycosyl hydrolase 22 family. As to expression, expressed by the skin glands.

The protein resides in the secreted. The enzyme catalyses Hydrolysis of (1-&gt;4)-beta-linkages between N-acetylmuramic acid and N-acetyl-D-glucosamine residues in a peptidoglycan and between N-acetyl-D-glucosamine residues in chitodextrins.. In terms of biological role, lysozymes have primarily a bacteriolytic function; those in tissues and body fluids are associated with the monocyte-macrophage system and enhance the activity of immunoagents. Has antibacterial activity against the Gram-positive bacterium S.aureus and against the Gram-negative bacterium E.coli with a MIC of 1 uM and 8 uM respectively. No antifungal activity against C.albicans. This Bufo gargarizans andrewsi (Andrew's toad) protein is Lysozyme C.